The chain runs to 115 residues: T cell receptor delta variable 2 (115 aa).

The first 19 residues, 1-19 (MQRISSLIHLSLFWAGVMS), serve as a signal peptide directing secretion. The region spanning 25 to 115 (PEHQTVPVSI…EGSYYCACDT (91 aa)) is the Ig-like domain. Cysteines 42 and 111 form a disulfide.

Gamma-delta TR is a heterodimer composed of a gamma and delta chain; disulfide-linked. The gamma-delta TR is associated with the transmembrane signaling CD3 coreceptor proteins following the stoichiometry: a single gamma-delta TR heterodimer associates with one CD3D-CD3E heterodimer, one CD3G-CD3E heterodimer and one CD247 homodimer forming a stable octameric structure. Upon activation, gamma-delta TR complex associates with FCER1G to initiate intracellular signaling.

Its subcellular location is the cell membrane. Its function is as follows. V region of the variable domain of T cell receptor (TR) delta chain that participates in the antigen recognition. Gamma-delta TRs recognize a variety of self and foreign non-peptide antigens frequently expressed at the epithelial boundaries between the host and external environment, including endogenous lipids presented by MH-like protein CD1D and phosphoantigens presented by butyrophilin-like molecule BTN3A1. Upon antigen recognition induces rapid, innate-like immune responses involved in pathogen clearance and tissue repair. Binding of gamma-delta TR complex to antigen triggers phosphorylation of immunoreceptor tyrosine-based activation motifs (ITAMs) in the CD3 chains by the LCK and FYN kinases, allowing the recruitment, phosphorylation, and activation of ZAP70 that facilitates phosphorylation of the scaffolding proteins LCP2 and LAT. This lead to the formation of a supramolecular signalosome that recruits the phospholipase PLCG1, resulting in calcium mobilization and ERK activation, ultimately leading to T cell expansion and differentiation into effector cells. Gamma-delta TRs are produced through somatic rearrangement of a limited repertoire of variable (V), diversity (D), and joining (J) genes. The potential diversity of gamma-delta TRs is conferred by the unique ability to rearrange (D) genes in tandem and to utilize all three reading frames. The combinatorial diversity is considerably increased by the sequence exonuclease trimming and random nucleotide (N) region additions which occur during the V-(D)-J rearrangements. In Homo sapiens (Human), this protein is T cell receptor delta variable 2.